The sequence spans 206 residues: Dephospho-CoA kinase (206 aa).

A DPCK domain is found at 6 to 206 (IIGLTGGIAS…KWKWKDWSKK (201 aa)). 14-19 (ASGKST) is an ATP binding site.

The protein belongs to the CoaE family.

The protein localises to the cytoplasm. It catalyses the reaction 3'-dephospho-CoA + ATP = ADP + CoA + H(+). The protein operates within cofactor biosynthesis; coenzyme A biosynthesis; CoA from (R)-pantothenate: step 5/5. In terms of biological role, catalyzes the phosphorylation of the 3'-hydroxyl group of dephosphocoenzyme A to form coenzyme A. In Carboxydothermus hydrogenoformans (strain ATCC BAA-161 / DSM 6008 / Z-2901), this protein is Dephospho-CoA kinase.